Reading from the N-terminus, the 453-residue chain is MNIVILAAGTGKRMRSALPKVLHPLAGRPLLAHVIDTARTLKPTHLVVVIGHGAEAVRKAVAAPDVQFAVQEQQLGTGHAVQQALPLLDPSAPTLVLYGDVPLTRAGTLQALTDRAGQGGYGVLTVTLADPSGYGRIVRDAHGKVARIVEQKDATPEQLAIAEINTGIIVAPTERLGDWLAALKNDNAQGEFYLTDAVEMAIEAGLEVVTTQPDHEWETLGVNSKQQLAELERIHQRNVADALLVAGVTLADPARLDVRGTLECGRDVSIDVNCVFEGRVTLADNVTVGPNCVIRNANIGAGTRVDAFTHIEGAEVGANVVLGPYARLRPGASLHDESHVGNFVEVKNAVLGHGSKANHLTYIGDADIGARVNIGAGTITCNYDGANKFRTIIEDDVFVGSDTQLVAPVRVKRGATIAAGTTVWKDVEADALVLNDKTQTSRTGYVRPTKKKS.

A pyrophosphorylase region spans residues 1–225 (MNIVILAAGT…EWETLGVNSK (225 aa)). Residues 6 to 9 (LAAG), lysine 20, glutamine 71, 76 to 77 (GT), 98 to 100 (YGD), glycine 135, glutamate 150, asparagine 165, and asparagine 223 contribute to the UDP-N-acetyl-alpha-D-glucosamine site. Aspartate 100 is a Mg(2+) binding site. Asparagine 223 provides a ligand contact to Mg(2+). The interval 226–246 (QQLAELERIHQRNVADALLVA) is linker. The tract at residues 247–453 (GVTLADPARL…GYVRPTKKKS (207 aa)) is N-acetyltransferase. 2 residues coordinate UDP-N-acetyl-alpha-D-glucosamine: arginine 329 and lysine 347. The Proton acceptor role is filled by histidine 359. UDP-N-acetyl-alpha-D-glucosamine contacts are provided by tyrosine 362 and asparagine 373. Acetyl-CoA-binding positions include alanine 376, 382–383 (NY), serine 401, and alanine 419.

This sequence in the N-terminal section; belongs to the N-acetylglucosamine-1-phosphate uridyltransferase family. It in the C-terminal section; belongs to the transferase hexapeptide repeat family. As to quaternary structure, homotrimer. Requires Mg(2+) as cofactor.

Its subcellular location is the cytoplasm. It catalyses the reaction alpha-D-glucosamine 1-phosphate + acetyl-CoA = N-acetyl-alpha-D-glucosamine 1-phosphate + CoA + H(+). It carries out the reaction N-acetyl-alpha-D-glucosamine 1-phosphate + UTP + H(+) = UDP-N-acetyl-alpha-D-glucosamine + diphosphate. Its pathway is nucleotide-sugar biosynthesis; UDP-N-acetyl-alpha-D-glucosamine biosynthesis; N-acetyl-alpha-D-glucosamine 1-phosphate from alpha-D-glucosamine 6-phosphate (route II): step 2/2. It participates in nucleotide-sugar biosynthesis; UDP-N-acetyl-alpha-D-glucosamine biosynthesis; UDP-N-acetyl-alpha-D-glucosamine from N-acetyl-alpha-D-glucosamine 1-phosphate: step 1/1. The protein operates within bacterial outer membrane biogenesis; LPS lipid A biosynthesis. Functionally, catalyzes the last two sequential reactions in the de novo biosynthetic pathway for UDP-N-acetylglucosamine (UDP-GlcNAc). The C-terminal domain catalyzes the transfer of acetyl group from acetyl coenzyme A to glucosamine-1-phosphate (GlcN-1-P) to produce N-acetylglucosamine-1-phosphate (GlcNAc-1-P), which is converted into UDP-GlcNAc by the transfer of uridine 5-monophosphate (from uridine 5-triphosphate), a reaction catalyzed by the N-terminal domain. In Paraburkholderia xenovorans (strain LB400), this protein is Bifunctional protein GlmU.